Here is a 469-residue protein sequence, read N- to C-terminus: Glutamate--tRNA ligase (469 aa).

The short motif at 9-19 is the 'HIGH' region element; that stretch reads PSPTGYLHVGG. Zn(2+) is bound by residues Cys-98, Cys-100, Cys-125, and Asp-127. The short motif at 237–241 is the 'KMSKS' region element; the sequence is KLSKR. Residue Lys-240 coordinates ATP.

Belongs to the class-I aminoacyl-tRNA synthetase family. Glutamate--tRNA ligase type 1 subfamily. As to quaternary structure, monomer. Requires Zn(2+) as cofactor.

The protein localises to the cytoplasm. It catalyses the reaction tRNA(Glu) + L-glutamate + ATP = L-glutamyl-tRNA(Glu) + AMP + diphosphate. In terms of biological role, catalyzes the attachment of glutamate to tRNA(Glu) in a two-step reaction: glutamate is first activated by ATP to form Glu-AMP and then transferred to the acceptor end of tRNA(Glu). The chain is Glutamate--tRNA ligase from Serratia proteamaculans (strain 568).